A 281-amino-acid chain; its full sequence is Diaminopimelate epimerase (281 aa).

Substrate-binding residues include asparagine 13 and asparagine 66. Cysteine 75 functions as the Proton donor in the catalytic mechanism. Substrate-binding positions include 76 to 77, asparagine 164, asparagine 197, and 215 to 216; these read GN and ER. Cysteine 224 acts as the Proton acceptor in catalysis. Residue 225-226 coordinates substrate; the sequence is GT.

The protein belongs to the diaminopimelate epimerase family. Homodimer.

Its subcellular location is the cytoplasm. The enzyme catalyses (2S,6S)-2,6-diaminopimelate = meso-2,6-diaminopimelate. The protein operates within amino-acid biosynthesis; L-lysine biosynthesis via DAP pathway; DL-2,6-diaminopimelate from LL-2,6-diaminopimelate: step 1/1. In terms of biological role, catalyzes the stereoinversion of LL-2,6-diaminopimelate (L,L-DAP) to meso-diaminopimelate (meso-DAP), a precursor of L-lysine and an essential component of the bacterial peptidoglycan. This is Diaminopimelate epimerase from Gloeothece citriformis (strain PCC 7424) (Cyanothece sp. (strain PCC 7424)).